The primary structure comprises 401 residues: Probable thioesterase FGSG_00047 (401 aa).

Residues 379 to 401 form a disordered region; the sequence is AREMDQRKRQKDFTHTTIHDKNS.

It belongs to the AMT4 thioesterase family.

It participates in mycotoxin biosynthesis. In terms of biological role, probable thioesterase; part of the gene cluster that mediates the biosynthesis of gramillins A and B, bicyclic lipopeptides that induce cell death in maize leaves but not in wheat leaves. The nonribosomal peptide synthetase GRA1 incorporates respectively a glutamic adic (Glu), a leucine (Leu), a serine (Ser), a hydroxyglutamine (HOGln), a 2-amino decanoic acid, and 2 cysteins (CysB and CysA). The biosynthesis of 2-amino decanoic acid incorporated in gramillins could be initiated by a fatty acid synthase composed of the alpha and beta subunits FGSG_00036 and FGSG_11656. The cytochrome P450 monooxygenase FGSG_15680 could hydroxylate the fatty acid chain. Subsequent oxidation to the ketone by the oxidoreductase FGSG_00048 and transamination by aminotransferase FGSG_00049 could form 2-amino-decanoic acid. On the other hand, FGSG_15680 could also be responsible for the HO-modified glutamine at the gamma-position. Whether hydroxylation occurs on the fully assembled product or on the Gln residue prior to assembly into the gramillins requires further proof. The thioredoxin FGSG_00043 could also be required for the disulfide-bond formation between CysA and CysB. The specific involvement of the remaining proteins from the cluster is more difficult to discern, but could have broader regulatory (FGSG_00040 and FGSG_11657) or enzymatic functions (FGSG_00044 and FGSG_00045). The final C-domain of GRA1 does not possess the expected sequence of a termination CT domain, often implicated in macrocyclization and release of a cyclopeptidein fungal NRPs; and the thioesterase FGSG_00047 may act in concert with the terminal C-domain of GRA1 to catalyze the formation of the macrocyclic anhydride and release of the products. The sequence is that of Probable thioesterase FGSG_00047 from Gibberella zeae (strain ATCC MYA-4620 / CBS 123657 / FGSC 9075 / NRRL 31084 / PH-1) (Wheat head blight fungus).